We begin with the raw amino-acid sequence, 423 residues long: Serine--tRNA ligase 2 (423 aa).

Residue 231 to 233 (TAE) coordinates L-serine. 262–264 (RSE) provides a ligand contact to ATP. Residue Glu285 participates in L-serine binding. ATP is bound at residue 349–352 (EISS). Ser384 provides a ligand contact to L-serine.

The protein belongs to the class-II aminoacyl-tRNA synthetase family. Type-1 seryl-tRNA synthetase subfamily. In terms of assembly, homodimer. The tRNA molecule binds across the dimer.

It localises to the cytoplasm. It catalyses the reaction tRNA(Ser) + L-serine + ATP = L-seryl-tRNA(Ser) + AMP + diphosphate + H(+). The catalysed reaction is tRNA(Sec) + L-serine + ATP = L-seryl-tRNA(Sec) + AMP + diphosphate + H(+). The protein operates within aminoacyl-tRNA biosynthesis; selenocysteinyl-tRNA(Sec) biosynthesis; L-seryl-tRNA(Sec) from L-serine and tRNA(Sec): step 1/1. In terms of biological role, catalyzes the attachment of serine to tRNA(Ser). Is also able to aminoacylate tRNA(Sec) with serine, to form the misacylated tRNA L-seryl-tRNA(Sec), which will be further converted into selenocysteinyl-tRNA(Sec). This Enterococcus faecalis (strain ATCC 700802 / V583) protein is Serine--tRNA ligase 2.